The sequence spans 207 residues: 2,3-bisphosphoglycerate-dependent phosphoglycerate mutase (207 aa).

Residues 10-17, 23-24, R62, 89-92, K100, 116-117, and 160-161 contribute to the substrate site; these read RHGQSEWN, TG, ERDY, RR, and GN. Catalysis depends on H11, which acts as the Tele-phosphohistidine intermediate. Residue E89 is the Proton donor/acceptor of the active site.

The protein belongs to the phosphoglycerate mutase family. BPG-dependent PGAM subfamily. Homodimer.

The catalysed reaction is (2R)-2-phosphoglycerate = (2R)-3-phosphoglycerate. Its pathway is carbohydrate degradation; glycolysis; pyruvate from D-glyceraldehyde 3-phosphate: step 3/5. Catalyzes the interconversion of 2-phosphoglycerate and 3-phosphoglycerate. This chain is 2,3-bisphosphoglycerate-dependent phosphoglycerate mutase, found in Bradyrhizobium sp. (strain BTAi1 / ATCC BAA-1182).